The primary structure comprises 158 residues: Ribosome maturation factor RimP (158 aa).

This sequence belongs to the RimP family.

The protein resides in the cytoplasm. In terms of biological role, required for maturation of 30S ribosomal subunits. This Pseudomonas fluorescens (strain Pf0-1) protein is Ribosome maturation factor RimP.